We begin with the raw amino-acid sequence, 467 residues long: FK506-binding protein 4 (467 aa).

2 disordered regions span residues 64 to 163 (KATG…GDDD) and 208 to 357 (GNFV…KPTS). Composition is skewed to acidic residues over residues 71-80 (DDDDEEEDEY), 147-163 (SDEEESDEESDCCGDDD), and 213-254 (PEDD…DELD). Composition is skewed to basic and acidic residues over residues 271–287 (APKLVDTSKKGKKRPAE) and 312–332 (QKVEEAKKEEPKKETKSDKKV). The region spanning 381–467 (GDRVGMRYIG…IFDVKLLEIK (87 aa)) is the PPIase FKBP-type domain.

Belongs to the FKBP-type PPIase family. FKBP3/4 subfamily. In terms of assembly, binds to histones H3 and H4.

Its subcellular location is the nucleus. The catalysed reaction is [protein]-peptidylproline (omega=180) = [protein]-peptidylproline (omega=0). With respect to regulation, inhibited by both FK506 and rapamycin. Its function is as follows. PPIase that acts as a histone chaperone. Histone proline isomerase that increases the rate of cis-trans isomerization at prolines on the histone H3 N-terminal tail. Proline isomerization influences H3 methylation thereby regulating gene expression. The sequence is that of FK506-binding protein 4 (fkr-4) from Neurospora crassa (strain ATCC 24698 / 74-OR23-1A / CBS 708.71 / DSM 1257 / FGSC 987).